Reading from the N-terminus, the 523-residue chain is Fidgetin-like protein 1 (523 aa).

Positions 114 to 154 (PVQQAVKSRPEGQFPESRNNSTKKIDAQQYSSESSSQSGFG) are disordered. Over residues 141–151 (QQYSSESSSQS) the composition is skewed to low complexity. Residues Ala-253 and 293–298 (GTGKTL) contribute to the ATP site.

This sequence belongs to the AAA ATPase family. Hexamer. It depends on Mg(2+) as a cofactor.

The catalysed reaction is ATP + H2O = ADP + phosphate + H(+). In Drosophila melanogaster (Fruit fly), this protein is Fidgetin-like protein 1.